Reading from the N-terminus, the 805-residue chain is Cation channel sperm-associated auxiliary subunit delta (805 aa).

A signal peptide spans 1-16; the sequence is MLVLMLAAAVATMVRA. The Extracellular portion of the chain corresponds to 17-723; it reads HTLCRVHTVR…ALPVTKFQPL (707 aa). Intrachain disulfides connect Cys20–Cys366, Cys56–Cys143, Cys142–Cys149, Cys384–Cys493, Cys507–Cys701, Cys522–Cys569, and Cys621–Cys651. Asn227, Asn419, Asn469, Asn535, and Asn627 each carry an N-linked (GlcNAc...) asparagine glycan. Residues 724-745 traverse the membrane as a helical segment; that stretch reads LTILLMVTTTLLTAWLAYAIPK. Residues 746–805 lie on the Cytoplasmic side of the membrane; that stretch reads QLRSEKGQRLLGFCYQILQLCLGVCFCTWLRGKLRQWLRPRRVKDQNRGKVRVAQKHPET.

Belongs to the CATSPERD family. Component of the CatSper complex or CatSpermasome composed of the core pore-forming members CATSPER1, CATSPER2, CATSPER3 and CATSPER4 as well as auxiliary members CATSPERB, CATSPERG2, CATSPERD, CATSPERE, CATSPERZ, C2CD6/CATSPERT, SLCO6C1, TMEM249, TMEM262 and EFCAB9. HSPA1 may be an additional auxiliary complex member. The core complex members CATSPER1, CATSPER2, CATSPER3 and CATSPER4 form a heterotetrameric channel. The auxiliary CATSPERB, CATSPERG2, CATSPERD and CATSPERE subunits form a pavilion-like structure over the pore which stabilizes the complex through interactions with CATSPER4, CATSPER3, CATSPER1 and CATSPER2 respectively. SLCO6C1 interacts with CATSPERE and TMEM262/CATSPERH interacts with CATSPERB, further stabilizing the complex. C2CD6/CATSPERT interacts at least with CATSPERD and is required for targeting the CatSper complex in the flagellar membrane. As to expression, testis-specific.

The protein localises to the cell projection. Its subcellular location is the cilium. It is found in the flagellum membrane. In terms of biological role, auxiliary component of the CatSper complex, a complex involved in sperm cell hyperactivation. Sperm cell hyperactivation is needed for sperm motility which is essential late in the preparation of sperm for fertilization. Required for CATSPER1 stability before intraflagellar transport and/or incorporation of the CatSper complex channel into the flagellar membrane. The chain is Cation channel sperm-associated auxiliary subunit delta from Mus musculus (Mouse).